A 106-amino-acid polypeptide reads, in one-letter code: Small ribosomal subunit protein uS10 (106 aa).

Belongs to the universal ribosomal protein uS10 family. As to quaternary structure, part of the 30S ribosomal subunit.

Functionally, involved in the binding of tRNA to the ribosomes. The polypeptide is Small ribosomal subunit protein uS10 (Synechococcus sp. (strain CC9902)).